Consider the following 330-residue polypeptide: D-cysteine desulfhydrase (330 aa).

Position 52 is an N6-(pyridoxal phosphate)lysine (Lys-52).

The protein belongs to the ACC deaminase/D-cysteine desulfhydrase family. Homodimer. Requires pyridoxal 5'-phosphate as cofactor.

It carries out the reaction D-cysteine + H2O = hydrogen sulfide + pyruvate + NH4(+) + H(+). Catalyzes the alpha,beta-elimination reaction of D-cysteine and of several D-cysteine derivatives. It could be a defense mechanism against D-cysteine. In Yersinia enterocolitica serotype O:8 / biotype 1B (strain NCTC 13174 / 8081), this protein is D-cysteine desulfhydrase.